The primary structure comprises 166 residues: uncharacterized protein (166 aa).

This sequence to M.jannaschii MJ0992.

This is an uncharacterized protein from Methanocaldococcus jannaschii (strain ATCC 43067 / DSM 2661 / JAL-1 / JCM 10045 / NBRC 100440) (Methanococcus jannaschii).